Here is a 243-residue protein sequence, read N- to C-terminus: Small ribosomal subunit protein uS3 (243 aa).

The KH type-2 domain occupies 39-110; the sequence is IRTFIQKKYG…QVRINVVEVE (72 aa). The disordered stretch occupies residues 216-243; it reads QTIPVGASPKRKASRRPQQFEDRSNENS. Positions 233–243 are enriched in basic and acidic residues; it reads QQFEDRSNENS.

This sequence belongs to the universal ribosomal protein uS3 family. In terms of assembly, part of the 30S ribosomal subunit. Forms a tight complex with proteins S10 and S14.

In terms of biological role, binds the lower part of the 30S subunit head. Binds mRNA in the 70S ribosome, positioning it for translation. The sequence is that of Small ribosomal subunit protein uS3 from Prochlorococcus marinus (strain AS9601).